We begin with the raw amino-acid sequence, 222 residues long: Large ribosomal subunit protein uL4 (222 aa).

The interval 50 to 72 (TRGRSEVSHSTKKPFRQKGTGNA) is disordered.

The protein belongs to the universal ribosomal protein uL4 family. As to quaternary structure, part of the 50S ribosomal subunit.

One of the primary rRNA binding proteins, this protein initially binds near the 5'-end of the 23S rRNA. It is important during the early stages of 50S assembly. It makes multiple contacts with different domains of the 23S rRNA in the assembled 50S subunit and ribosome. Its function is as follows. Forms part of the polypeptide exit tunnel. The chain is Large ribosomal subunit protein uL4 from Chlamydia trachomatis serovar A (strain ATCC VR-571B / DSM 19440 / HAR-13).